A 984-amino-acid chain; its full sequence is Ephrin type-A receptor 3 (984 aa).

Positions 1 to 20 (MDCHLSILILFGCCVLSCSR) are cleaved as a signal peptide. The Extracellular portion of the chain corresponds to 21 to 541 (ELSPQPSNEV…SFSISGENSH (521 aa)). The region spanning 29 to 207 (EVNLLDSKTI…YFKKCPFTVK (179 aa)) is the Eph LBD domain. 5 N-linked (GlcNAc...) asparagine glycosylation sites follow: N232, N337, N391, N404, and N493. 2 Fibronectin type-III domains span residues 325 to 435 (PPSA…TNQA) and 436 to 532 (APSP…SPDS). Residues 542–565 (VVMIAISAAVAIIVLTVVTYVLVG) traverse the membrane as a helical segment. Residues 566-984 (RFCGYHKSKH…TQSKNGPVPV (419 aa)) lie on the Cytoplasmic side of the membrane. Phosphotyrosine; by autocatalysis is present on residues Y597 and Y603. Residues 622 to 883 (IAIDKVVGAG…QIVSILDKLI (262 aa)) form the Protein kinase domain. ATP contacts are provided by residues 629–634 (GAGEFG), K654, and 701–707 (EYMENGS). Y702 carries the phosphotyrosine; by autocatalysis modification. Residue D747 is the Proton acceptor of the active site. ATP is bound at residue 751-752 (RN). Y780 carries the phosphotyrosine; by autocatalysis modification. Residues 912 to 976 (ATFHTTGDWL…ISSIKALETQ (65 aa)) form the SAM domain. Y938 is modified (phosphotyrosine). The PDZ-binding signature appears at 982 to 984 (VPV).

The protein belongs to the protein kinase superfamily. Tyr protein kinase family. Ephrin receptor subfamily. In terms of assembly, heterotetramer upon binding of the ligand. The heterotetramer is composed of an ephrin dimer and a receptor dimer. Oligomerization is probably required to induce biological responses. Forms a ternary EFNA5-EPHA3-ADAM10 complex mediating EFNA5 extracellular domain shedding by ADAM10 which regulates the EFNA5-EPHA3 complex internalization and function. Interacts (phosphorylated) with PTPN1; dephosphorylates EPHA3 and may regulate its trafficking and function. Interacts (phosphorylated) with CRK; mediates EFNA5-EPHA3 signaling through RHOA GTPase activation. Interacts with NCK1 (via SH2 domain); mediates EFNA5-EPHA3 signaling. In terms of processing, autophosphorylates upon activation by EFNA5. Phosphorylation on Tyr-603 mediates interaction with NCK1. Dephosphorylated by PTPN1. Most abundant in the heart, brain and lung.

The protein localises to the cell membrane. The enzyme catalyses L-tyrosyl-[protein] + ATP = O-phospho-L-tyrosyl-[protein] + ADP + H(+). Functionally, receptor tyrosine kinase which binds promiscuously membrane-bound ephrin family ligands residing on adjacent cells, leading to contact-dependent bidirectional signaling into neighboring cells. The signaling pathway downstream of the receptor is referred to as forward signaling while the signaling pathway downstream of the ephrin ligand is referred to as reverse signaling. Highly promiscuous for ephrin-A ligands it binds preferentially EFNA5. Upon activation by EFNA5 regulates cell-cell adhesion, cytoskeletal organization and cell migration. Plays a role in cardiac cells migration and differentiation and regulates the formation of the atrioventricular canal and septum during development probably through activation by EFNA1. Involved in the retinotectal mapping of neurons. May also control the segregation but not the guidance of motor and sensory axons during neuromuscular circuit development. The protein is Ephrin type-A receptor 3 (Epha3) of Rattus norvegicus (Rat).